The primary structure comprises 320 residues: N-acetylneuraminate lyase (320 aa).

Aceneuramate contacts are provided by Thr-51 and Thr-52. Tyr-143 (proton donor) is an active-site residue. The Schiff-base intermediate with substrate role is filled by Lys-173. Positions 175, 199, 201, 202, and 218 each coordinate aceneuramate.

Belongs to the DapA family. NanA subfamily. In terms of assembly, homotetramer.

The protein localises to the cytoplasm. The catalysed reaction is aceneuramate = aldehydo-N-acetyl-D-mannosamine + pyruvate. The protein operates within amino-sugar metabolism; N-acetylneuraminate degradation. Catalyzes the cleavage of N-acetylneuraminic acid (sialic acid) to form pyruvate and N-acetylmannosamine via a Schiff base intermediate. It prevents sialic acids from being recycled and returning to the cell surface. Involved in the N-glycolylneuraminic acid (Neu5Gc) degradation pathway. This is N-acetylneuraminate lyase from Pongo abelii (Sumatran orangutan).